Consider the following 164-residue polypeptide: Lipoprotein signal peptidase (164 aa).

The next 2 helical transmembrane spans lie at 68–88 (TILV…LWNA) and 96–116 (FWGL…RAMF). Catalysis depends on residues D121 and D139. Residues 134–154 (TFNVADSAIVVGSCLLLIDLL) form a helical membrane-spanning segment.

This sequence belongs to the peptidase A8 family.

It localises to the cell inner membrane. The enzyme catalyses Release of signal peptides from bacterial membrane prolipoproteins. Hydrolyzes -Xaa-Yaa-Zaa-|-(S,diacylglyceryl)Cys-, in which Xaa is hydrophobic (preferably Leu), and Yaa (Ala or Ser) and Zaa (Gly or Ala) have small, neutral side chains.. It participates in protein modification; lipoprotein biosynthesis (signal peptide cleavage). Its function is as follows. This protein specifically catalyzes the removal of signal peptides from prolipoproteins. The chain is Lipoprotein signal peptidase from Solibacter usitatus (strain Ellin6076).